The primary structure comprises 494 residues: 3-octaprenyl-4-hydroxybenzoate carboxy-lyase (494 aa).

Residue Asn172 coordinates Mn(2+). Prenylated FMN-binding positions include 175–177 (IYR), 189–191 (RWL), and 194–195 (RG). Residue Glu238 participates in Mn(2+) binding. Catalysis depends on Asp287, which acts as the Proton donor.

The protein belongs to the UbiD family. Homohexamer. The cofactor is prenylated FMN. It depends on Mn(2+) as a cofactor.

It localises to the cell membrane. It catalyses the reaction a 4-hydroxy-3-(all-trans-polyprenyl)benzoate + H(+) = a 2-(all-trans-polyprenyl)phenol + CO2. The protein operates within cofactor biosynthesis; ubiquinone biosynthesis. Functionally, catalyzes the decarboxylation of 3-octaprenyl-4-hydroxy benzoate to 2-octaprenylphenol, an intermediate step in ubiquinone biosynthesis. This is 3-octaprenyl-4-hydroxybenzoate carboxy-lyase from Cronobacter sakazakii (strain ATCC BAA-894) (Enterobacter sakazakii).